The chain runs to 384 residues: Aurora kinase (384 aa).

Polar residues-rich tracts occupy residues 1–12 and 19–29; these read MSYPNNKENSNN and SVPSKQPQRVL. The disordered stretch occupies residues 1–100; that stretch reads MSYPNNKENS…SSSSSSSQSV (100 aa). Over residues 30–99 the composition is skewed to low complexity; the sequence is QQQNTNINNH…SSSSSSSSQS (70 aa). Residues 110 to 360 form the Protein kinase domain; the sequence is FDIGKLLGMG…LKDVINHPWI (251 aa). Residues 116–124 and K139 each bind ATP; that span reads LGMGRFGHV. The active-site Proton acceptor is D233.

This sequence belongs to the protein kinase superfamily. Ser/Thr protein kinase family. Aurora subfamily. In terms of assembly, interacts with icpA. Forms a complex at the central spindle.

The protein resides in the cytoplasm. It is found in the chromosome. The protein localises to the centromere. Its subcellular location is the cytoskeleton. It localises to the spindle pole. The protein resides in the cleavage furrow. It is found in the cell projection. The protein localises to the neuron projection. It catalyses the reaction L-seryl-[protein] + ATP = O-phospho-L-seryl-[protein] + ADP + H(+). It carries out the reaction L-threonyl-[protein] + ATP = O-phospho-L-threonyl-[protein] + ADP + H(+). Its function is as follows. Part of a chromosomal passenger complex. This Dictyostelium discoideum (Social amoeba) protein is Aurora kinase (aurK).